Consider the following 335-residue polypeptide: Methionine import ATP-binding protein MetN (335 aa).

Residues 2–241 (IEFQRLHKSY…PKHVTTRRFV (240 aa)) enclose the ABC transporter domain. ATP is bound at residue 38–45 (GHSGAGKS).

It belongs to the ABC transporter superfamily. Methionine importer (TC 3.A.1.24) family. As to quaternary structure, the complex is composed of two ATP-binding proteins (MetN), two transmembrane proteins (MetI) and a solute-binding protein (MetQ).

It localises to the cell inner membrane. It catalyses the reaction L-methionine(out) + ATP + H2O = L-methionine(in) + ADP + phosphate + H(+). It carries out the reaction D-methionine(out) + ATP + H2O = D-methionine(in) + ADP + phosphate + H(+). Its function is as follows. Part of the ABC transporter complex MetNIQ involved in methionine import. Responsible for energy coupling to the transport system. This chain is Methionine import ATP-binding protein MetN, found in Xanthomonas oryzae pv. oryzae (strain MAFF 311018).